We begin with the raw amino-acid sequence, 562 residues long: Probable malate:quinone oxidoreductase (562 aa).

The interval 530-562 (EVPDKSATPTDPTIAPKHQHSTTHNANSEMQAL) is disordered. A compositionally biased stretch (polar residues) spans 551-562 (TTHNANSEMQAL).

This sequence belongs to the MQO family. FAD serves as cofactor.

It catalyses the reaction (S)-malate + a quinone = a quinol + oxaloacetate. Its pathway is carbohydrate metabolism; tricarboxylic acid cycle; oxaloacetate from (S)-malate (quinone route): step 1/1. In Xylella fastidiosa (strain M12), this protein is Probable malate:quinone oxidoreductase.